A 209-amino-acid polypeptide reads, in one-letter code: MADRRKIGTKDKWKEKTWYTIVAPSFLGEREIALSPAADPSLMIGRKVEVPVSDFTGNFRKSSTMVIFRVKECTGKRCTTEFIGHKVSDDTIRRMVRRRKERIDIIMPSKTKDGYRLVIKIVLVSDSKLTANKRGEVRSKIIGFINERCGSMTLPELAQYIIGDNVYNDIVDTLKDVYPIKKIEIRKSEVLGRDGYVEEPGAQTQIEAQ.

The protein belongs to the eukaryotic ribosomal protein eS1 family.

In Picrophilus torridus (strain ATCC 700027 / DSM 9790 / JCM 10055 / NBRC 100828 / KAW 2/3), this protein is Small ribosomal subunit protein eS1.